Reading from the N-terminus, the 616-residue chain is MTMRSAVFKAAAAPAGGNPEQRLDYERAAALGGPEDESGAAEAHFLPRHRKLKEPGPPLASSQGGSPSPSPAGCGGGKGRGLLLPAGAAPGQQEESWGGSVPLPCPPPATKQAGIGGEPVAAGAGCSPRPKYQAVLPIQTGSIVVAAAKEPTPWAGDKGGAAPPAATASDPAGPPPLPLPGPPPLAPTATAGTLAASEGRWKSIRKSPLGGGGGSGASSQAACLKQILLLQLDLIEQQQQQLQAKEKEIEELKSERDTLLARIERMERRMQLVKRDNEKERHKLLQGYEPEEREEAELSEKIKLERQPELCETSQALPSKPFSCGRSGKGHKRKTPFGNTERKTPVKKLAPEFSKVKTKTPKHSPIKEEPCGSISETVCKRELRSQETPEKPRSSVDTPPRLSTPQKGPSTHPKEKAFSSEMEDLPYLSTTEMYLCRWHQPPPSPLPLRESSPKKEETVARCLMPSSVAGETSVLAVPSWRDHSVEPLRDPNPSDILENLDDSVFSKRHAKLELDEKRRKRWDIQRIREQRILQRLQLRMYKKKGIQESEPEVTSFFPEPDDVESLLITPFLPVVAFGRPLPKLAPQNFELPWLDERSRCRLEIQKKHTPHRTCRK.

Residues 1-116 (MTMRSAVFKA…PPATKQAGIG (116 aa)) are disordered. Position 66 is a phosphoserine (Ser66). Positions 81-91 (GLLLPAGAAPG) are enriched in low complexity. Ser127 is subject to Phosphoserine. The tract at residues 152-218 (TPWAGDKGGA…LGGGGGSGAS (67 aa)) is disordered. Residues 153–171 (PWAGDKGGAAPPAATASDP) are compositionally biased toward low complexity. Over residues 172-186 (AGPPPLPLPGPPPLA) the composition is skewed to pro residues. Positions 187–196 (PTATAGTLAA) are enriched in low complexity. At Ser207 the chain carries Phosphoserine. A coiled-coil region spans residues 215 to 284 (SGASSQAACL…RDNEKERHKL (70 aa)). An interaction with MSL2 region spans residues 225–239 (KQILLLQLDLIEQQQ). A Glycyl lysine isopeptide (Lys-Gly) (interchain with G-Cter in SUMO2) cross-link involves residue Lys303. Residues 306–422 (RQPELCETSQ…PKEKAFSSEM (117 aa)) are disordered. Residues 319 to 348 (SKPFSCGRSGKGHKRKTPFGNTERKTPVKK) carry the Nuclear localization signal motif. Lys355 carries the post-translational modification N6-acetyllysine. Residues Thr358 and Thr360 each carry the phosphothreonine modification. The residue at position 364 (Ser364) is a Phosphoserine. Residues Lys367 and Lys380 each participate in a glycyl lysine isopeptide (Lys-Gly) (interchain with G-Cter in SUMO2) cross-link. Over residues 378–394 (VCKRELRSQETPEKPRS) the composition is skewed to basic and acidic residues. Position 385 is a phosphoserine (Ser385). Phosphothreonine is present on Thr388. Position 395 is a phosphoserine (Ser395). The span at 395–409 (SVDTPPRLSTPQKGP) shows a compositional bias: polar residues. Thr398 and Thr404 each carry phosphothreonine. 3 positions are modified to phosphoserine: Ser444, Ser452, and Ser484. Residues 474-593 (VLAVPSWRDH…LAPQNFELPW (120 aa)) enclose the PEHE domain. The interaction with KAT8 HAT domain stretch occupies residues 498–516 (ENLDDSVFSKRHAKLELDE). The Bipartite nuclear localization signal motif lies at 507 to 521 (KRHAKLELDEKRRKR). Residues 552–593 (EVTSFFPEPDDVESLLITPFLPVVAFGRPLPKLAPQNFELPW) form an interaction with MSL3 MRG domain region.

This sequence belongs to the msl-1 family. Component of a multisubunit histone acetyltransferase complex (MSL) at least composed of the KAT8/MOF/MYST1, MSL1/hampin, MSL2 and MSL3. Interacts (via PEHE domain) with KAT8 (via HAT domain) and MSL3 (via MRG domain); both interactions are direct. Directly interacts with MSL2 via its coiled coil domain. Directly interacts with NUPR1. Interacts with TP53BP1; this interaction may be required for MSL1 DNA repair activity, but not for histone acetyltransferase activity. Forms a MSL heterotetrameric core with MSL2. Isoform 1 and isoform 3 interact with TTC4. Isoform 1 interacts with ECM2 and PIHD1. Sumoylated with SUMO1. As to expression, isoform 3 and isoform 5 are testis-specific. Isoform 1 and isoform 4 are ubiquitously expressed. Isoform 2 is expressed at low levels in the testis and brain.

The protein resides in the nucleus. It is found in the nucleus speckle. The protein localises to the nucleoplasm. Functionally, non-catalytic component of the MSL histone acetyltransferase complex, a multiprotein complex that mediates the majority of histone H4 acetylation at 'Lys-16' (H4K16ac), an epigenetic mark that prevents chromatin compaction. The MSL complex is required for chromosome stability and genome integrity by maintaining homeostatic levels of H4K16ac. The MSL complex is also involved in gene dosage by promoting up-regulation of genes expressed by the X chromosome. X up-regulation is required to compensate for autosomal biallelic expression. The MSL complex also participates in gene dosage compensation by promoting expression of Tsix non-coding RNA. Within the MSL complex, acts as a scaffold to tether MSL3 and KAT8 together for enzymatic activity regulation. Greatly enhances MSL2 E3 ubiquitin ligase activity, promoting monoubiquitination of histone H2B at 'Lys-34' (H2BK34Ub). This modification in turn stimulates histone H3 methylation at 'Lys-4' (H3K4me) and 'Lys-79' (H3K79me) and leads to gene activation, including that of HOXA9 and MEIS1. This chain is Male-specific lethal 1 homolog, found in Mus musculus (Mouse).